The chain runs to 859 residues: Bifunctional levopimaradiene synthase, chloroplastic (859 aa).

The transit peptide at 1 to 52 directs the protein to the chloroplast; sequence MALLSSSLSSHIPTGAHHLTLNAYANTQCIPHFFSTLNAGTSAGKRSSLYLR. Residues aspartate 392, aspartate 394, aspartate 611, aspartate 615, asparagine 755, and glutamate 763 each coordinate Mg(2+). The short motif at 392–395 is the DXDD motif element; sequence DIDD. The DDXXD motif motif lies at 611 to 615; sequence DDLYD.

It belongs to the terpene synthase family. Tpsd subfamily. Mg(2+) is required as a cofactor. It depends on Mn(2+) as a cofactor.

The protein resides in the plastid. Its subcellular location is the chloroplast. The enzyme catalyses (+)-copalyl diphosphate = abieta-8(14),12-diene + diphosphate. It carries out the reaction (+)-copalyl diphosphate = abieta-7,13-diene + diphosphate. The protein operates within secondary metabolite biosynthesis; terpenoid biosynthesis. Its pathway is terpene metabolism; oleoresin biosynthesis. Its function is as follows. Terpene synthase (di-TPS) involved in the biosynthesis of diterpene natural products included in conifer oleoresin secretions and volatile emissions; these compounds contribute to biotic and abiotic stress defense against herbivores and pathogens. Catalyzes the conversion of (+)-copalyl diphosphate ((+)-CPP) to isopimaradiene. This chain is Bifunctional levopimaradiene synthase, chloroplastic, found in Picea sitchensis (Sitka spruce).